The following is a 500-amino-acid chain: L-arabinose isomerase (500 aa).

4 residues coordinate Mn(2+): Glu306, Glu333, His350, and His450.

Belongs to the arabinose isomerase family. In terms of assembly, homohexamer. Requires Mn(2+) as cofactor.

It catalyses the reaction beta-L-arabinopyranose = L-ribulose. It functions in the pathway carbohydrate degradation; L-arabinose degradation via L-ribulose; D-xylulose 5-phosphate from L-arabinose (bacterial route): step 1/3. Functionally, catalyzes the conversion of L-arabinose to L-ribulose. This Salmonella typhi protein is L-arabinose isomerase.